We begin with the raw amino-acid sequence, 359 residues long: uncharacterized protein (359 aa).

46–53 (GPKSSGKS) provides a ligand contact to ATP.

Belongs to the archaeal ATPase family.

This is an uncharacterized protein from Methanocaldococcus jannaschii (strain ATCC 43067 / DSM 2661 / JAL-1 / JCM 10045 / NBRC 100440) (Methanococcus jannaschii).